Here is a 527-residue protein sequence, read N- to C-terminus: Chorismate synthase (527 aa).

Residues histidine 17, histidine 104, and aspartate 485 contribute to the active site.

The protein belongs to the chorismate synthase family.

The protein localises to the cytoplasm. Its subcellular location is the cytosol. It catalyses the reaction 5-O-(1-carboxyvinyl)-3-phosphoshikimate = chorismate + phosphate. It carries out the reaction FMNH2 + NADP(+) = FMN + NADPH + 2 H(+). It functions in the pathway metabolic intermediate biosynthesis; chorismate biosynthesis; chorismate from D-erythrose 4-phosphate and phosphoenolpyruvate: step 7/7. Functionally, bifunctional chorismate synthase and flavin reductase. Catalyzes the conversion of 5-enolpyruvylshikimate 3-phosphate (EPSP) to form chorismate. Acts also as a flavin reductase (FR) able to generate reduced flavin mononucleotide in the presence of NADPH. The chain is Chorismate synthase from Plasmodium falciparum (isolate 3D7).